The sequence spans 99 residues: Nucleoid-associated protein SEQ_0368 (99 aa).

It belongs to the YbaB/EbfC family. In terms of assembly, homodimer.

The protein localises to the cytoplasm. Its subcellular location is the nucleoid. Binds to DNA and alters its conformation. May be involved in regulation of gene expression, nucleoid organization and DNA protection. This chain is Nucleoid-associated protein SEQ_0368, found in Streptococcus equi subsp. equi (strain 4047).